The primary structure comprises 206 residues: 2-phospho-L-lactate guanylyltransferase (206 aa).

Belongs to the CofC family. As to quaternary structure, homodimer.

It catalyses the reaction (2S)-2-phospholactate + GTP + H(+) = (2S)-lactyl-2-diphospho-5'-guanosine + diphosphate. Its pathway is cofactor biosynthesis; coenzyme F420 biosynthesis. In terms of biological role, guanylyltransferase that catalyzes the activation of (2S)-2-phospholactate (2-PL) as (2S)-lactyl-2-diphospho-5'-guanosine, via the condensation of 2-PL with GTP. It is involved in the biosynthesis of coenzyme F420, a hydride carrier cofactor. This is 2-phospho-L-lactate guanylyltransferase from Archaeoglobus fulgidus (strain ATCC 49558 / DSM 4304 / JCM 9628 / NBRC 100126 / VC-16).